The chain runs to 293 residues: Bifunctional protein FolD 1 (293 aa).

NADP(+)-binding positions include 174 to 176 and T240; that span reads GRS.

Belongs to the tetrahydrofolate dehydrogenase/cyclohydrolase family. As to quaternary structure, homodimer.

The enzyme catalyses (6R)-5,10-methylene-5,6,7,8-tetrahydrofolate + NADP(+) = (6R)-5,10-methenyltetrahydrofolate + NADPH. It catalyses the reaction (6R)-5,10-methenyltetrahydrofolate + H2O = (6R)-10-formyltetrahydrofolate + H(+). The protein operates within one-carbon metabolism; tetrahydrofolate interconversion. In terms of biological role, catalyzes the oxidation of 5,10-methylenetetrahydrofolate to 5,10-methenyltetrahydrofolate and then the hydrolysis of 5,10-methenyltetrahydrofolate to 10-formyltetrahydrofolate. This is Bifunctional protein FolD 1 from Saccharopolyspora erythraea (strain ATCC 11635 / DSM 40517 / JCM 4748 / NBRC 13426 / NCIMB 8594 / NRRL 2338).